The sequence spans 391 residues: DNA repair protein NreB (391 aa).

Residues 3 to 17 form a C4-type zinc finger; the sequence is CIECRGRMLCSRKVC. The PIP motif motif lies at 384–391; that stretch reads QRTLWEFM.

It belongs to the Nre family. Interacts with the DNA polymerase sliding clamp (PCNA) via the PIP (PCNA-interacting peptide) motif.

Involved in DNA damage repair. This chain is DNA repair protein NreB, found in Archaeoglobus fulgidus (strain ATCC 49558 / DSM 4304 / JCM 9628 / NBRC 100126 / VC-16).